Here is a 377-residue protein sequence, read N- to C-terminus: Chaperone protein DnaJ 1 (377 aa).

In terms of domain architecture, J spans 4-68; it reads DYYQTLGVTR…EIRQRYDQFG (65 aa). Residues 136–218 form a CR-type zinc finger; it reads GGEKEIRIPH…CNGVGRKQET (83 aa). The Zn(2+) site is built by Cys149, Cys152, Cys166, Cys169, Cys192, Cys195, Cys206, and Cys209. CXXCXGXG motif repeat units follow at residues 149–156, 166–173, 192–199, and 206–213; these read CQVCEGTG, CGTCNGAG, CPTCNGSG, and CEACNGVG.

This sequence belongs to the DnaJ family. Homodimer. The cofactor is Zn(2+).

It is found in the cytoplasm. In terms of biological role, participates actively in the response to hyperosmotic and heat shock by preventing the aggregation of stress-denatured proteins and by disaggregating proteins, also in an autonomous, DnaK-independent fashion. Unfolded proteins bind initially to DnaJ; upon interaction with the DnaJ-bound protein, DnaK hydrolyzes its bound ATP, resulting in the formation of a stable complex. GrpE releases ADP from DnaK; ATP binding to DnaK triggers the release of the substrate protein, thus completing the reaction cycle. Several rounds of ATP-dependent interactions between DnaJ, DnaK and GrpE are required for fully efficient folding. Also involved, together with DnaK and GrpE, in the DNA replication of plasmids through activation of initiation proteins. This Synechocystis sp. (strain ATCC 27184 / PCC 6803 / Kazusa) protein is Chaperone protein DnaJ 1.